A 562-amino-acid chain; its full sequence is NAD-dependent malic enzyme (562 aa).

The active-site Proton donor is Tyr-101. Arg-154 is an NAD(+) binding site. The Proton acceptor role is filled by Lys-172. Residues Glu-243, Asp-244, and Asp-267 each coordinate a divalent metal cation. The NAD(+) site is built by Asp-267 and Asn-415.

It belongs to the malic enzymes family. In terms of assembly, homotetramer. Mg(2+) is required as a cofactor. The cofactor is Mn(2+).

It catalyses the reaction (S)-malate + NAD(+) = pyruvate + CO2 + NADH. The enzyme catalyses oxaloacetate + H(+) = pyruvate + CO2. The sequence is that of NAD-dependent malic enzyme from Idiomarina loihiensis (strain ATCC BAA-735 / DSM 15497 / L2-TR).